The sequence spans 362 residues: Holliday junction branch migration complex subunit RuvB (362 aa).

The interval 1 to 20 is disordered; sequence MKRTIMTNTDTFEQPNTGAN. Residues 15–203 form a large ATPase domain (RuvB-L) region; sequence PNTGANEESL…FGFTAHLDFY (189 aa). Residues Leu-42, Arg-43, Gly-84, Lys-87, Thr-88, Thr-89, 150–152, Arg-193, Tyr-203, and Arg-240 each bind ATP; that span reads EDF. Thr-88 is a Mg(2+) binding site. The segment at 204–274 is small ATPAse domain (RuvB-S); it reads PHEELEKLIE…DVKEALALYQ (71 aa). Residues 277–362 form a head domain (RuvB-H) region; that stretch reads TEGLDRLDIA…ESAYDVNEMS (86 aa). 2 residues coordinate DNA: Arg-332 and Arg-337.

This sequence belongs to the RuvB family. As to quaternary structure, homohexamer. Forms an RuvA(8)-RuvB(12)-Holliday junction (HJ) complex. HJ DNA is sandwiched between 2 RuvA tetramers; dsDNA enters through RuvA and exits via RuvB. An RuvB hexamer assembles on each DNA strand where it exits the tetramer. Each RuvB hexamer is contacted by two RuvA subunits (via domain III) on 2 adjacent RuvB subunits; this complex drives branch migration. In the full resolvosome a probable DNA-RuvA(4)-RuvB(12)-RuvC(2) complex forms which resolves the HJ.

The protein localises to the cytoplasm. The catalysed reaction is ATP + H2O = ADP + phosphate + H(+). Functionally, the RuvA-RuvB-RuvC complex processes Holliday junction (HJ) DNA during genetic recombination and DNA repair, while the RuvA-RuvB complex plays an important role in the rescue of blocked DNA replication forks via replication fork reversal (RFR). RuvA specifically binds to HJ cruciform DNA, conferring on it an open structure. The RuvB hexamer acts as an ATP-dependent pump, pulling dsDNA into and through the RuvAB complex. RuvB forms 2 homohexamers on either side of HJ DNA bound by 1 or 2 RuvA tetramers; 4 subunits per hexamer contact DNA at a time. Coordinated motions by a converter formed by DNA-disengaged RuvB subunits stimulates ATP hydrolysis and nucleotide exchange. Immobilization of the converter enables RuvB to convert the ATP-contained energy into a lever motion, pulling 2 nucleotides of DNA out of the RuvA tetramer per ATP hydrolyzed, thus driving DNA branch migration. The RuvB motors rotate together with the DNA substrate, which together with the progressing nucleotide cycle form the mechanistic basis for DNA recombination by continuous HJ branch migration. Branch migration allows RuvC to scan DNA until it finds its consensus sequence, where it cleaves and resolves cruciform DNA. The protein is Holliday junction branch migration complex subunit RuvB of Bifidobacterium adolescentis (strain ATCC 15703 / DSM 20083 / NCTC 11814 / E194a).